A 452-amino-acid polypeptide reads, in one-letter code: Tissue alpha-L-fucosidase (452 aa).

An N-terminal signal peptide occupies residues 1 to 17; it reads MLLLLLLLLVAAAQAVA. Residues N227, N254, N368, and N378 are each glycosylated (N-linked (GlcNAc...) asparagine).

This sequence belongs to the glycosyl hydrolase 29 family. As to quaternary structure, homotetramer.

The protein localises to the lysosome. It carries out the reaction an alpha-L-fucoside + H2O = L-fucose + an alcohol. It catalyses the reaction a neolactoside IV(2)-alpha-Fuc-nLc4Cer(d18:1(4E)) + H2O = a neolactoside nLc4Cer(d18:1(4E)) + L-fucose. The catalysed reaction is a neolactoside IV(2)-alpha-Fuc-nLc4Cer(d18:0) + H2O = a neolactoside nLc4Cer(d18:0) + L-fucose. Functionally, alpha-L-fucosidase is responsible for hydrolyzing the alpha-1,6-linked fucose joined to the reducing-end N-acetylglucosamine of the carbohydrate moieties of glycoproteins. The sequence is that of Tissue alpha-L-fucosidase (Fuca1) from Mus musculus (Mouse).